A 521-amino-acid chain; its full sequence is Ankyrin repeat and death domain-containing protein 1B (521 aa).

ANK repeat units follow at residues 60–89, 93–122, 126–155, 159–190, 194–223, 227–256, 260–289, 293–322, 326–355, and 359–388; these read AIER…NINA, MNRT…RVDV, HGLT…DQRA, EGMN…DLNQ, RGRK…HTSE, DGNT…EVNE, LNVS…DLQQ, SKEP…DVDV, RRQT…NLKI, and QGKT…YYAW. In terms of domain architecture, Death spans 420–508; it reads TLLWNLAYRQ…ELAEKIRQFK (89 aa).

The polypeptide is Ankyrin repeat and death domain-containing protein 1B (Ankdd1b) (Mus musculus (Mouse)).